The following is a 114-amino-acid chain: uncharacterized protein (114 aa).

The disordered stretch occupies residues 90–114; sequence VESSQKRKPEESTIGMDAPKKMKRG.

This is an uncharacterized protein from Caenorhabditis elegans.